The sequence spans 466 residues: Benzoate transport protein (466 aa).

Topologically, residues 1–22 (MSREINVNQMIDDSKLTPFHWR) are cytoplasmic. Residues 23 to 43 (VIILSTLIIIFDGYDLVIYGV) traverse the membrane as a helical segment. Residues 44-60 (ALPLLMKEWAIDPVTAG) are Periplasmic-facing. A helical membrane pass occupies residues 61-81 (FIGSIALFGMMFGALIFGTIA). Residues 82-93 (DKLEHLGVSRKK) are Cytoplasmic-facing. The helical transmembrane segment at 94–114 (VIAVCIILFSLCTVLCGFSET) threads the bilayer. The Periplasmic segment spans residues 115 to 119 (TTQFS). A helical transmembrane segment spans residues 120-140 (IFRFLAGVGIGGVMPNVIALV). Residues 141-150 (SEYAPKKFKS) are Cytoplasmic-facing. A helical transmembrane segment spans residues 151–171 (FFVTLMFSGYAIGGMTAAFLG). Residues 172 to 181 (SILVPLYGWK) are Periplasmic-facing. A helical transmembrane segment spans residues 182-202 (IMFMIAGIPLVLLLPLMKVLP). Over 203 to 258 (ESIDYLVRKKKDETVRFIMTKMVPSYQYQPDHVFVLNSSNQNQAQAPVKMIFQEQR) the chain is Cytoplasmic. A helical transmembrane segment spans residues 259–279 (AFSTMMFWCSIFMTLIMVYAL). The Periplasmic portion of the chain corresponds to 280–297 (GNWLPKLMIEAGYNLSKS). Residues 298-318 (LIFLFSLNVGGMIGSILGGYL) traverse the membrane as a helical segment. The Cytoplasmic portion of the chain corresponds to 319-325 (ADRYNVK). The chain crosses the membrane as a helical span at residues 326-346 (FVTMGLLLLGAISLSLLSFQF). Residues 347–348 (SS) lie on the Periplasmic side of the membrane. Residues 349–369 (VILYILIACAGAASIGAQIML) form a helical membrane-spanning segment. At 370-387 (LAYMAKFYAPNVRSTGIG) the chain is on the cytoplasmic side. Residues 388–408 (WGLGMGRVGAILGPILTGWLL) form a helical membrane-spanning segment. Residues 409–414 (SLQLPH) lie on the Periplasmic side of the membrane. Residues 415–435 (FYNFLALSIPAVLGIVTVFLI) form a helical membrane-spanning segment. The Cytoplasmic portion of the chain corresponds to 436–466 (NDRRMYQPEPISPIANQNDTTTVKVNEAVSH).

It belongs to the major facilitator superfamily. Aromatic acid:H(+) symporter (AAHS) (TC 2.A.1.15) family.

The protein localises to the cell inner membrane. Probable uptake of benzoate. In Acinetobacter baylyi (strain ATCC 33305 / BD413 / ADP1), this protein is Benzoate transport protein (benK).